Reading from the N-terminus, the 257-residue chain is 24 kDa outer membrane protein (257 aa).

The first 21 residues, 1–21, serve as a signal peptide directing secretion; that stretch reads MKNKSKLLACCLMALPISSFS.

The protein belongs to the MipA/OmpV family.

It localises to the cell outer membrane. In Pasteurella multocida (strain Pm70), this protein is 24 kDa outer membrane protein.